The chain runs to 413 residues: Histidine--tRNA ligase (413 aa).

It belongs to the class-II aminoacyl-tRNA synthetase family. In terms of assembly, homodimer.

Its subcellular location is the cytoplasm. It carries out the reaction tRNA(His) + L-histidine + ATP = L-histidyl-tRNA(His) + AMP + diphosphate + H(+). The sequence is that of Histidine--tRNA ligase from Geobacter metallireducens (strain ATCC 53774 / DSM 7210 / GS-15).